The sequence spans 369 residues: Tetraacyldisaccharide 4'-kinase (369 aa).

52 to 59 contacts ATP; that stretch reads TVGGTGKT.

Belongs to the LpxK family.

The enzyme catalyses a lipid A disaccharide + ATP = a lipid IVA + ADP + H(+). Its pathway is glycolipid biosynthesis; lipid IV(A) biosynthesis; lipid IV(A) from (3R)-3-hydroxytetradecanoyl-[acyl-carrier-protein] and UDP-N-acetyl-alpha-D-glucosamine: step 6/6. Its function is as follows. Transfers the gamma-phosphate of ATP to the 4'-position of a tetraacyldisaccharide 1-phosphate intermediate (termed DS-1-P) to form tetraacyldisaccharide 1,4'-bis-phosphate (lipid IVA). This chain is Tetraacyldisaccharide 4'-kinase, found in Parabacteroides distasonis (strain ATCC 8503 / DSM 20701 / CIP 104284 / JCM 5825 / NCTC 11152).